The primary structure comprises 217 residues: Neuron-specific vesicular protein calcyon (217 aa).

Positions 1-25 (MVKLGCSFSGKPGKDPGDQDGAAMD) are disordered. Residues 1 to 87 (MVKLGCSFSG…EEGRRLPTAR (87 aa)) are Extracellular-facing. N-linked (GlcNAc...) asparagine glycosylation occurs at Asn73. Residues 88 to 108 (MIAFAMALLGCVLIMYKAIWY) traverse the membrane as a helical segment. The Cytoplasmic segment spans residues 109-217 (DQFTCPDGFL…AGSAAPPPAQ (109 aa)). The segment at 162 to 217 (PAAWGDGYRAAKEERKGPTQAGAAAAATEPPGKPSAKAEKEAARKAAGSAAPPPAQ) is disordered.

It belongs to the NSG family. Interacts with CLTA. Post-translationally, glycosylated. In terms of tissue distribution, expressed in the pyramidal cells of the prefrontal cortex, in hypothalamus and in caudate nucleus. No expression in spleen. Up-regulated in the prefrontal cortex of schizophrenic patients with nearly twice the levels of non-schizophrenics.

The protein localises to the cytoplasmic vesicle membrane. It localises to the cell membrane. Its function is as follows. Interacts with clathrin light chain A and stimulates clathrin self-assembly and clathrin-mediated endocytosis. The protein is Neuron-specific vesicular protein calcyon (CALY) of Homo sapiens (Human).